Reading from the N-terminus, the 344-residue chain is Transcription factor JunB (344 aa).

Glycyl lysine isopeptide (Lys-Gly) (interchain with G-Cter in SUMO2) cross-links involve residues Lys-4, Lys-33, and Lys-36. The span at Lys-51 to Ala-65 shows a compositional bias: gly residues. A disordered region spans residues Lys-51 to Asp-75. Lys-81 participates in a covalent cross-link: Glycyl lysine isopeptide (Lys-Gly) (interchain with G-Cter in SUMO2). Phosphothreonine occurs at positions 102 and 104. Ser-117 carries the phosphoserine modification. Residue Lys-138 forms a Glycyl lysine isopeptide (Lys-Gly) (interchain with G-Cter in SUMO2) linkage. Disordered stretches follow at residues Asn-181 to Gly-202 and Lys-237 to Pro-257. Low complexity predominate over residues Ser-183–Ser-192. Lys-237 is modified (N6-acetyllysine; alternate). Residue Lys-237 forms a Glycyl lysine isopeptide (Lys-Gly) (interchain with G-Cter in SUMO1); alternate linkage. A Glycyl lysine isopeptide (Lys-Gly) (interchain with G-Cter in SUMO2); alternate cross-link involves residue Lys-237. Basic and acidic residues predominate over residues Lys-237–Asp-250. Residue Ser-248 is modified to Phosphoserine. Thr-252 bears the Phosphothreonine mark. Residue Ser-256 is modified to Phosphoserine. The tract at residues Arg-265–Arg-292 is basic motif. A bZIP domain is found at Arg-265–His-328. Residues Leu-293 to Leu-321 are leucine-zipper. Lys-340 participates in a covalent cross-link: Glycyl lysine isopeptide (Lys-Gly) (interchain with G-Cter in SUMO2).

It belongs to the bZIP family. Jun subfamily. As to quaternary structure, binds DNA as a homodimer or as a heterodimer with another member of the Jun/Fos family. Component of an AP-1 transcription factor complex composed of JUN-FOS heterodimers. As part of the AP-1 transcription factor complex, forms heterodimers with FOSB, thereby binding to the AP-1 consensus sequence and stimulating transcription. Interacts with NFE2 (via its WW domains). Ubiquitinated by ITCH, leading to its degradation.

Its subcellular location is the nucleus. Functionally, transcription factor involved in regulating gene activity following the primary growth factor response. Binds to the DNA sequence 5'-TGA[GC]TCA-3'. Heterodimerizes with proteins of the FOS family to form an AP-1 transcription complex, thereby enhancing its DNA binding activity to an AP-1 consensus sequence 5'-TGA[GC]TCA-3' and enhancing its transcriptional activity. In Mus musculus (Mouse), this protein is Transcription factor JunB (Junb).